Here is a 427-residue protein sequence, read N- to C-terminus: Phosphatidylglycerol--prolipoprotein diacylglyceryl transferase (427 aa).

4 helical membrane passes run 21 to 41, 53 to 73, 96 to 116, and 122 to 142; these read VPIRAYALFIIAGIVAALLIG, GVIYDIALWTVPFGLVGGRLY, IWDGGLGIWGAVALGAVGAWI, and GIPLPAFADALAPGIILAQAI. Residue Arg-144 participates in a 1,2-diacyl-sn-glycero-3-phospho-(1'-sn-glycerol) binding. 2 consecutive transmembrane segments (helical) span residues 189 to 209 and 256 to 276; these read VALVVQPTFLYELLWNLLIFV and INSFTSTFVFIGAVVYLMAAP. The tract at residues 280 to 427 is disordered; sequence EDPESLRGNQ…ARLRERLSGR (148 aa). Positions 299-330 are enriched in low complexity; the sequence is EPATVAATTEAATEGVAAPADGAEAAGADATA. Basic and acidic residues predominate over residues 332-346; the sequence is RPEESAEPDVEKPES. Over residues 347–404 the composition is skewed to acidic residues; the sequence is EETEAAEEASEPEAEEPEAPEAEEPEEPETEEPEADSGEEPEEESGEAPEQLVAEEPE. Over residues 411-427 the composition is skewed to basic and acidic residues; that stretch reads ETKRRWGARLRERLSGR.

Belongs to the Lgt family.

It is found in the cell membrane. The enzyme catalyses L-cysteinyl-[prolipoprotein] + a 1,2-diacyl-sn-glycero-3-phospho-(1'-sn-glycerol) = an S-1,2-diacyl-sn-glyceryl-L-cysteinyl-[prolipoprotein] + sn-glycerol 1-phosphate + H(+). It participates in protein modification; lipoprotein biosynthesis (diacylglyceryl transfer). Its function is as follows. Catalyzes the transfer of the diacylglyceryl group from phosphatidylglycerol to the sulfhydryl group of the N-terminal cysteine of a prolipoprotein, the first step in the formation of mature lipoproteins. This Mycolicibacterium paratuberculosis (strain ATCC BAA-968 / K-10) (Mycobacterium paratuberculosis) protein is Phosphatidylglycerol--prolipoprotein diacylglyceryl transferase.